A 324-amino-acid polypeptide reads, in one-letter code: tRNA pseudouridine synthase B (324 aa).

Asp-49 serves as the catalytic Nucleophile.

It belongs to the pseudouridine synthase TruB family. Type 1 subfamily.

It carries out the reaction uridine(55) in tRNA = pseudouridine(55) in tRNA. In terms of biological role, responsible for synthesis of pseudouridine from uracil-55 in the psi GC loop of transfer RNAs. This is tRNA pseudouridine synthase B from Brucella anthropi (strain ATCC 49188 / DSM 6882 / CCUG 24695 / JCM 21032 / LMG 3331 / NBRC 15819 / NCTC 12168 / Alc 37) (Ochrobactrum anthropi).